An 85-amino-acid chain; its full sequence is Cell division topological specificity factor (85 aa).

This sequence belongs to the MinE family.

Its function is as follows. Prevents the cell division inhibition by proteins MinC and MinD at internal division sites while permitting inhibition at polar sites. This ensures cell division at the proper site by restricting the formation of a division septum at the midpoint of the long axis of the cell. The polypeptide is Cell division topological specificity factor (Cellvibrio japonicus (strain Ueda107) (Pseudomonas fluorescens subsp. cellulosa)).